Reading from the N-terminus, the 63-residue chain is Large ribosomal subunit protein bL32 (63 aa).

It belongs to the bacterial ribosomal protein bL32 family.

This Acholeplasma laidlawii protein is Large ribosomal subunit protein bL32.